The following is a 229-amino-acid chain: Large ribosomal subunit protein uL1 (229 aa).

This sequence belongs to the universal ribosomal protein uL1 family. Part of the 50S ribosomal subunit.

In terms of biological role, binds directly to 23S rRNA. The L1 stalk is quite mobile in the ribosome, and is involved in E site tRNA release. Protein L1 is also a translational repressor protein, it controls the translation of the L11 operon by binding to its mRNA. The protein is Large ribosomal subunit protein uL1 of Enterococcus faecalis (strain ATCC 700802 / V583).